An 822-amino-acid chain; its full sequence is Probable alpha,alpha-trehalose-phosphate synthase [UDP-forming] 2 (822 aa).

Residues 12 to 479 form a glycosyltransferase region; it reads PRLLVVANRL…GLDFMSELNG (468 aa).

This sequence in the N-terminal section; belongs to the glycosyltransferase 20 family. It in the C-terminal section; belongs to the trehalose phosphatase family.

It catalyses the reaction D-glucose 6-phosphate + UDP-alpha-D-glucose = alpha,alpha-trehalose 6-phosphate + UDP + H(+). The polypeptide is Probable alpha,alpha-trehalose-phosphate synthase [UDP-forming] 2 (TPS2) (Arabidopsis thaliana (Mouse-ear cress)).